The primary structure comprises 315 residues: Gamma-hemolysin component C (315 aa).

The signal sequence occupies residues 1–29; the sequence is MLKNKILTTTLSVSLLAPLANPLLENAKA.

It belongs to the aerolysin family. In terms of assembly, toxicity requires sequential binding and synergistic association of a class S and a class F component which form heterooligomeric complexes. HlgC (class S) associates with HlgB (class F) thus forming an CB toxin.

Its function is as follows. Toxin that seems to act by forming pores in the membrane of the cell. Has a hemolytic and a leucotoxic activity. This chain is Gamma-hemolysin component C (hlgC), found in Staphylococcus aureus (strain COL).